Here is a 323-residue protein sequence, read N- to C-terminus: NADH-ubiquinone oxidoreductase chain 1 (323 aa).

Helical transmembrane passes span 9–29, 76–96, 107–127, 145–165, 175–195, 227–247, 258–278, and 298–318; these read ILNPLIYMVPVLLAVAFLTLI, LFVLPVLALTLALTLWAPMPM, ILFVLALSSLAVYSILGSGWA, ISYEVSLGLILLSVIIFSGGF, EATWLALPAWPLAAMWYISTL, LFFLAEYANILLMNTLSAVLF, EFTSLTLMTKAALLSMVFLWV, and FLPLTLALVIWHLSLSTACAG.

This sequence belongs to the complex I subunit 1 family.

It is found in the mitochondrion inner membrane. The enzyme catalyses a ubiquinone + NADH + 5 H(+)(in) = a ubiquinol + NAD(+) + 4 H(+)(out). In terms of biological role, core subunit of the mitochondrial membrane respiratory chain NADH dehydrogenase (Complex I) that is believed to belong to the minimal assembly required for catalysis. Complex I functions in the transfer of electrons from NADH to the respiratory chain. The immediate electron acceptor for the enzyme is believed to be ubiquinone. This is NADH-ubiquinone oxidoreductase chain 1 (MT-ND1) from Gadus morhua (Atlantic cod).